The primary structure comprises 79 residues: Large ribosomal subunit protein bL28 (79 aa).

The disordered stretch occupies residues 1–26 (MAKVCQVTGKRPQSGNNVSHANKKTN). Polar residues predominate over residues 11–20 (RPQSGNNVSH).

The protein belongs to the bacterial ribosomal protein bL28 family.

This chain is Large ribosomal subunit protein bL28, found in Coxiella burnetii (strain CbuK_Q154) (Coxiella burnetii (strain Q154)).